We begin with the raw amino-acid sequence, 95 residues long: Small ribosomal subunit protein bS20c (95 aa).

It belongs to the bacterial ribosomal protein bS20 family.

Its subcellular location is the plastid. The protein resides in the cyanelle. Its function is as follows. Binds directly to 16S ribosomal RNA. This Cyanophora paradoxa protein is Small ribosomal subunit protein bS20c (rps20).